The chain runs to 416 residues: MSLVAIGINHKTATVDLREKVAFAPDRIHDAMKSLASCTQSGEAVIISTCNRTELYCNNSEAADVVAWLEDYHQLSHEDVEPCLYQYKGQEAVKHLMRVSAGLDSLILGEPQILGQVKQSFVKAKEAGTVAATMDRMFQNTFSVAKKIRTETEIGAAAVSVAFAAVSMAKHIFSSLSTTQVLLVGAGETIELVARHLKDNGVKAMVVANRTISRAEAMCDEFGATAITLEQIPDFLPKADIVISSTASPLPILGKGMVEKALKQRRHQPMLLVDIAVPRDIEAEVADLDDAFLYTVDDLQSIIEQNMASRREAAEQAELIAEDQAYQFMEWIRSLESVDSIREYRTQSMAIKDELVERAVNKLAQGGNSEQVLLELANKLTNKLIHAPTQALTAASRQGDLNSLGQLRAVLGLDKD.

Substrate-binding positions include 49 to 52, Ser-105, 110 to 112, and Gln-116; these read TCNR and EPQ. Catalysis depends on Cys-50, which acts as the Nucleophile. Position 185-190 (185-190) interacts with NADP(+); that stretch reads GAGETI.

The protein belongs to the glutamyl-tRNA reductase family. As to quaternary structure, homodimer.

It catalyses the reaction (S)-4-amino-5-oxopentanoate + tRNA(Glu) + NADP(+) = L-glutamyl-tRNA(Glu) + NADPH + H(+). The protein operates within porphyrin-containing compound metabolism; protoporphyrin-IX biosynthesis; 5-aminolevulinate from L-glutamyl-tRNA(Glu): step 1/2. In terms of biological role, catalyzes the NADPH-dependent reduction of glutamyl-tRNA(Glu) to glutamate 1-semialdehyde (GSA). The sequence is that of Glutamyl-tRNA reductase from Shewanella halifaxensis (strain HAW-EB4).